We begin with the raw amino-acid sequence, 1024 residues long: Multidrug resistance protein MdtC (1024 aa).

A run of 11 helical transmembrane segments spans residues 15–35 (WLLT…LPVA), 333–353 (EVEQ…FAFL), 360–380 (LIPA…MYLC), 387–407 (LSLM…IVVL), 431–451 (VGFT…PLLL), 463–483 (FAIT…TLTP), 528–548 (WGLL…ISIP), 853–873 (LWLI…LYES), 897–917 (LFNA…IGIV), 953–973 (PIIM…LGSG), and 984–1004 (ITIV…TPVV).

This sequence belongs to the resistance-nodulation-cell division (RND) (TC 2.A.6) family. MdtC subfamily. As to quaternary structure, part of a tripartite efflux system composed of MdtA, MdtB and MdtC. MdtC forms a heteromultimer with MdtB.

It localises to the cell inner membrane. The chain is Multidrug resistance protein MdtC from Erwinia tasmaniensis (strain DSM 17950 / CFBP 7177 / CIP 109463 / NCPPB 4357 / Et1/99).